The chain runs to 222 residues: Coiled-coil domain-containing protein 70 (222 aa).

Positions 129–153 (NALWERDRNLLQEDKALWEEEKALW) form a coiled coil.

This is Coiled-coil domain-containing protein 70 from Homo sapiens (Human).